The following is a 174-amino-acid chain: Disulfide bond formation protein B (174 aa).

Residues 1-14 (MLNFLNICSKTRKS) lie on the Cytoplasmic side of the membrane. The helical transmembrane segment at 15–31 (WVLLIFTVVILELIALY) threads the bilayer. The Periplasmic segment spans residues 32–49 (LQHIVLIKPCVLCVYQRC). The cysteines at positions 41 and 44 are disulfide-linked. Residues 50-65 (ALCGIGIAGLIGTIAP) form a helical membrane-spanning segment. Residues 66 to 71 (FTPLRF) are Cytoplasmic-facing. A helical membrane pass occupies residues 72–89 (FSIPIWIYSAWKGLLLAK). Topologically, residues 90–144 (EYTDIQLHPSPFFMCDLFVQFPHWLPLNKWWPSMFDADGDCAEYKWYFLSLEISQ) are periplasmic. C104 and C130 are disulfide-bonded. The helical transmembrane segment at 145 to 163 (WMLIIFANYLIIAILVSLS) threads the bilayer. Residues 164–174 (QIIDLKKWNNK) lie on the Cytoplasmic side of the membrane.

It belongs to the DsbB family.

It localises to the cell inner membrane. Its function is as follows. Required for disulfide bond formation in some periplasmic proteins. Acts by oxidizing the DsbA protein. The protein is Disulfide bond formation protein B of Blochmanniella pennsylvanica (strain BPEN).